Consider the following 283-residue polypeptide: Isochorismatase domain-containing protein 1 (283 aa).

It belongs to the isochorismatase family.

The sequence is that of Isochorismatase domain-containing protein 1 (isoc1) from Salmo salar (Atlantic salmon).